The sequence spans 181 residues: ATP-dependent protease subunit HslV (181 aa).

Thr5 is a catalytic residue. Ala161, Cys164, and Thr167 together coordinate Na(+).

The protein belongs to the peptidase T1B family. HslV subfamily. As to quaternary structure, a double ring-shaped homohexamer of HslV is capped on each side by a ring-shaped HslU homohexamer. The assembly of the HslU/HslV complex is dependent on binding of ATP.

The protein resides in the cytoplasm. The enzyme catalyses ATP-dependent cleavage of peptide bonds with broad specificity.. Its activity is regulated as follows. Allosterically activated by HslU binding. Functionally, protease subunit of a proteasome-like degradation complex believed to be a general protein degrading machinery. This is ATP-dependent protease subunit HslV from Sulfurimonas denitrificans (strain ATCC 33889 / DSM 1251) (Thiomicrospira denitrificans (strain ATCC 33889 / DSM 1251)).